The sequence spans 729 residues: Fatty acid oxidation complex subunit alpha (729 aa).

The segment at 1–189 (MLYKGDTLYL…KIGLVDGVVK (189 aa)) is enoyl-CoA hydratase/isomerase. Aspartate 296 is a binding site for substrate. The 3-hydroxyacyl-CoA dehydrogenase stretch occupies residues 311–729 (ETPKQAAVLG…ARPVGDLKTA (419 aa)). NAD(+)-binding positions include methionine 324, aspartate 343, 400–402 (VVE), lysine 407, and serine 429. The active-site For 3-hydroxyacyl-CoA dehydrogenase activity is histidine 450. Position 453 (asparagine 453) interacts with NAD(+). Residues asparagine 500 and tyrosine 660 each contribute to the substrate site. Residues 708 to 729 (RHNEPYYPPVEPARPVGDLKTA) form a disordered region.

It in the N-terminal section; belongs to the enoyl-CoA hydratase/isomerase family. This sequence in the C-terminal section; belongs to the 3-hydroxyacyl-CoA dehydrogenase family. Heterotetramer of two alpha chains (FadB) and two beta chains (FadA).

It catalyses the reaction a (3S)-3-hydroxyacyl-CoA + NAD(+) = a 3-oxoacyl-CoA + NADH + H(+). The enzyme catalyses a (3S)-3-hydroxyacyl-CoA = a (2E)-enoyl-CoA + H2O. The catalysed reaction is a 4-saturated-(3S)-3-hydroxyacyl-CoA = a (3E)-enoyl-CoA + H2O. It carries out the reaction (3S)-3-hydroxybutanoyl-CoA = (3R)-3-hydroxybutanoyl-CoA. It catalyses the reaction a (3Z)-enoyl-CoA = a 4-saturated (2E)-enoyl-CoA. The enzyme catalyses a (3E)-enoyl-CoA = a 4-saturated (2E)-enoyl-CoA. Its pathway is lipid metabolism; fatty acid beta-oxidation. Its function is as follows. Involved in the aerobic and anaerobic degradation of long-chain fatty acids via beta-oxidation cycle. Catalyzes the formation of 3-oxoacyl-CoA from enoyl-CoA via L-3-hydroxyacyl-CoA. It can also use D-3-hydroxyacyl-CoA and cis-3-enoyl-CoA as substrate. This Citrobacter koseri (strain ATCC BAA-895 / CDC 4225-83 / SGSC4696) protein is Fatty acid oxidation complex subunit alpha.